A 310-amino-acid polypeptide reads, in one-letter code: MKKEKIIVIVGPTGVGKTALSLQVAQQLKGEIISGDAMQVYRHLDIGTAKVTPAEQAIAPHHLIDVADIDERFTAFNFQQQGQQLITKITDRQHLPLIVGGTGLYLQALLYDMTLGSATDAEQDFSIRNKWQAYLEQHSETDLWQALAKIDPDAAAKIPAANTRRVIRALEVYETTGVLFSQQKPKELRYDTFIIGLNCERPVLYERINQRVDQMVDAGLIEEARWAYERRATSPQAVRGIGYKEFFPYFDGECSLEAAIDQVKQNSRHYAKRQLTWFRNQIPVNWYNLVEHQEADLARIQEDIQTWLQK.

11–18 (GPTGVGKT) provides a ligand contact to ATP. Residue 13 to 18 (TGVGKT) coordinates substrate.

The protein belongs to the IPP transferase family. As to quaternary structure, monomer. Mg(2+) is required as a cofactor.

The enzyme catalyses adenosine(37) in tRNA + dimethylallyl diphosphate = N(6)-dimethylallyladenosine(37) in tRNA + diphosphate. Functionally, catalyzes the transfer of a dimethylallyl group onto the adenine at position 37 in tRNAs that read codons beginning with uridine, leading to the formation of N6-(dimethylallyl)adenosine (i(6)A). The chain is tRNA dimethylallyltransferase from Latilactobacillus sakei subsp. sakei (strain 23K) (Lactobacillus sakei subsp. sakei).